We begin with the raw amino-acid sequence, 208 residues long: MRHRKSGVKLGRTGSHRNAMFRNMVTSLLKHEKIQTTDAKAKELRRWADHVITLAKRGDLHARRQVMAIVREKNVVHKLFAEAAERFGSREGGYTRLTKIGARPGDAAPVTLIELVSLTETTEKKKKKPAKTAAKPAPTPSAPAVEKEAAADTPAPAAEESAPAKAAEPEAEAAAPEAEAAPEEPEVPAADTPVEDDGASEEAPPKTE.

A disordered region spans residues 122–208 (TEKKKKKPAK…ASEEAPPKTE (87 aa)). Residues 151 to 179 (ADTPAPAAEESAPAKAAEPEAEAAAPEAE) are compositionally biased toward low complexity.

The protein belongs to the bacterial ribosomal protein bL17 family. Part of the 50S ribosomal subunit. Contacts protein L32.

This is Large ribosomal subunit protein bL17 from Desulfosudis oleivorans (strain DSM 6200 / JCM 39069 / Hxd3) (Desulfococcus oleovorans).